The following is a 570-amino-acid chain: Proline--tRNA ligase (570 aa).

This sequence belongs to the class-II aminoacyl-tRNA synthetase family. ProS type 1 subfamily. In terms of assembly, homodimer.

Its subcellular location is the cytoplasm. The enzyme catalyses tRNA(Pro) + L-proline + ATP = L-prolyl-tRNA(Pro) + AMP + diphosphate. Functionally, catalyzes the attachment of proline to tRNA(Pro) in a two-step reaction: proline is first activated by ATP to form Pro-AMP and then transferred to the acceptor end of tRNA(Pro). As ProRS can inadvertently accommodate and process non-cognate amino acids such as alanine and cysteine, to avoid such errors it has two additional distinct editing activities against alanine. One activity is designated as 'pretransfer' editing and involves the tRNA(Pro)-independent hydrolysis of activated Ala-AMP. The other activity is designated 'posttransfer' editing and involves deacylation of mischarged Ala-tRNA(Pro). The misacylated Cys-tRNA(Pro) is not edited by ProRS. This Neisseria meningitidis serogroup A / serotype 4A (strain DSM 15465 / Z2491) protein is Proline--tRNA ligase.